The chain runs to 365 residues: Putative tRNA 2'-phosphotransferase (365 aa).

Disordered regions lie at residues 1 to 35 (MYKNMNSHELIEESNNSGTPATKSSSKPTKKIRPR) and 231 to 254 (LLDAKASPKNNRSDESDQSDPESI). Positions 17-27 (SGTPATKSSSK) are enriched in low complexity.

This sequence belongs to the KptA/TPT1 family.

It catalyses the reaction 2'-phospho-[ligated tRNA] + NAD(+) = mature tRNA + ADP-alpha-D-ribose 1'',2''-cyclic phosphate + nicotinamide. Functionally, catalyzes the last step of tRNA splicing, the transfer of the splice junction 2'-phosphate from ligated tRNA to NAD to produce ADP-ribose 1''-2'' cyclic phosphate. This Schizosaccharomyces pombe (strain 972 / ATCC 24843) (Fission yeast) protein is Putative tRNA 2'-phosphotransferase.